The chain runs to 756 residues: Cellulose synthase catalytic subunit [UDP-forming] (756 aa).

A run of 4 helical transmembrane segments spans residues 27 to 47, 49 to 69, 106 to 126, and 167 to 187; these read ASYI…TVTL, NNEQ…VGRG, GILG…LFLS, and LTVL…VYIL. The interval 147–242 is catalytic subdomain A; sequence DWPTVDIFIP…YILILDCDHI (96 aa). D189 is an active-site residue. The substrate site is built by D238 and D240. The catalytic subdomain B stretch occupies residues 319-379; the sequence is EAIESIGGFA…GQRMRWARGM (61 aa). Residue D335 is part of the active site. The next 5 helical transmembrane spans lie at 409-429, 432-452, 470-490, 517-537, and 551-571; these read FFFA…LFAG, IIAA…FHSI, VYET…LLFP, NIIF…ELIV, and LLNC…IAVG. The region spanning 576–681 is the PilZ domain; that stretch reads QVRYNHRVEA…ERDIVRFVFG (106 aa). A disordered region spans residues 721–756; the sequence is NSRPKKKPLALPVERREPTTIHSGQTQEGKISRAAS. The span at 740-756 shows a compositional bias: polar residues; the sequence is TIHSGQTQEGKISRAAS.

The protein belongs to the glycosyltransferase 2 family. Mg(2+) is required as a cofactor.

It localises to the cell inner membrane. It catalyses the reaction [(1-&gt;4)-beta-D-glucosyl](n) + UDP-alpha-D-glucose = [(1-&gt;4)-beta-D-glucosyl](n+1) + UDP + H(+). The protein operates within glycan metabolism; bacterial cellulose biosynthesis. With respect to regulation, activated by bis-(3'-5') cyclic diguanylic acid (c-di-GMP). Functionally, catalytic subunit of cellulose synthase. It polymerizes uridine 5'-diphosphate glucose to cellulose. The thick cellulosic mats generated by this enzyme probably provide a specialized protective environment to the bacterium. The sequence is that of Cellulose synthase catalytic subunit [UDP-forming] (bcsA) from Komagataeibacter sucrofermentans (strain ATCC 700178 / DSM 15973 / CECT 7291 / JCM 9730 / LMG 18788 / BPR 2001) (Acetobacter xylinus subsp. sucrofermentans).